The primary structure comprises 387 residues: Intraflagellar transport protein 57 (387 aa).

Belongs to the IFT57 family.

The protein localises to the cell projection. It is found in the cilium. The protein resides in the flagellum. It localises to the cytoplasm. Its subcellular location is the cytoskeleton. The protein localises to the flagellum axoneme. It is found in the flagellum basal body. Functionally, component of the intraflagellar transport complex B (IFT-B) involved in flagellar assembly. The polypeptide is Intraflagellar transport protein 57 (Giardia intestinalis (strain ATCC 50803 / WB clone C6) (Giardia lamblia)).